A 272-amino-acid polypeptide reads, in one-letter code: Endoplasmic reticulum resident protein 27 (272 aa).

Positions 1–25 (MKITRSRCLILSFVLVCGLVPEVTA) are cleaved as a signal peptide. The Thioredoxin domain maps to 39–152 (EPIWLTDVPA…WVTEYSPMIA (114 aa)). Asn91 and Asn100 each carry an N-linked (GlcNAc...) asparagine glycan. The segment at 230 to 233 (DKWD) is PDIA3-binding site. The Prevents secretion from ER motif lies at 269–272 (KEEL).

The protein belongs to the protein disulfide isomerase family. Interacts with PDIA3.

It is found in the endoplasmic reticulum lumen. Specifically binds unfolded proteins and may recruit protein disulfide isomerase PDIA3 to unfolded substrates. Binds protein substrates via a hydrophobic pocket in the C-terminal domain. May play a role in the unfolded stress response. The polypeptide is Endoplasmic reticulum resident protein 27 (Erp27) (Mus musculus (Mouse)).